Here is a 482-residue protein sequence, read N- to C-terminus: Complement C1r subcomponent-like protein (482 aa).

An N-terminal signal peptide occupies residues 1-43 (MSGFRGLVPELENSLWSSPTTSCMSKMCWWLLWGILHTCPTQA). A CUB domain is found at 44-166 (SVLLAQQSPQ…KGFLALYQAV (123 aa)). 2 disulfides stabilise this stretch: C97-C115 and C190-C223. The region spanning 166–225 (VAVNQPNGDTEAVTTPGAPKIQNHCQDPYYKADQTGTLSCPSSWKWKDRQDGGEVPECVP) is the Sushi domain. The 240-residue stretch at 240–479 (TFGSSRAKLG…YMDWIKRVIE (240 aa)) folds into the Peptidase S1 domain. Active-site charge relay system residues include H278 and D334. N-linked (GlcNAc...) asparagine glycosylation occurs at N358. 2 disulfide bridges follow: C397–C416 and C427–C457. The active-site Charge relay system is S431.

It belongs to the peptidase S1 family. Expressed in liver (at protein level).

It localises to the secreted. Its function is as follows. Mediates the proteolytic cleavage of HP/haptoglobin in the endoplasmic reticulum. The protein is Complement C1r subcomponent-like protein (C1rl) of Mus musculus (Mouse).